Consider the following 51-residue polypeptide: uncharacterized protein (51 aa).

The segment at 1–51 is disordered; that stretch reads MARTNVKLCPPKRSKRPSNSRSKSTSHSNRRSLNSLRRTRTSRRSNNGKFT. Low complexity predominate over residues 19–36; it reads NSRSKSTSHSNRRSLNSL.

This is an uncharacterized protein from Bdellovibrio bacteriovorus (Bacteriophage phiMH2K).